The following is a 245-amino-acid chain: Probable phosphatase ECA2529 (245 aa).

Zn(2+) is bound by residues His-7, His-9, His-15, His-40, Glu-73, His-101, His-131, Asp-192, and His-194.

The protein belongs to the PHP family. As to quaternary structure, homotrimer. The cofactor is Zn(2+).

This chain is Probable phosphatase ECA2529, found in Pectobacterium atrosepticum (strain SCRI 1043 / ATCC BAA-672) (Erwinia carotovora subsp. atroseptica).